The sequence spans 165 residues: Chorismate pyruvate-lyase (165 aa).

The substrate site is built by M35, R77, L115, and E156.

It belongs to the UbiC family. In terms of assembly, monomer.

It localises to the cytoplasm. It carries out the reaction chorismate = 4-hydroxybenzoate + pyruvate. Its pathway is cofactor biosynthesis; ubiquinone biosynthesis. In terms of biological role, removes the pyruvyl group from chorismate, with concomitant aromatization of the ring, to provide 4-hydroxybenzoate (4HB) for the ubiquinone pathway. In Salmonella arizonae (strain ATCC BAA-731 / CDC346-86 / RSK2980), this protein is Chorismate pyruvate-lyase.